The following is a 986-amino-acid chain: Bifunctional glutamine synthetase adenylyltransferase/adenylyl-removing enzyme (986 aa).

The adenylyl removase stretch occupies residues 1–473 (MTSSAPGNAD…HYARLFEGDP (473 aa)). Positions 478–986 (SLPPVNYGAG…RRVFTALLER (509 aa)) are adenylyl transferase.

Belongs to the GlnE family. It depends on Mg(2+) as a cofactor.

The enzyme catalyses [glutamine synthetase]-O(4)-(5'-adenylyl)-L-tyrosine + phosphate = [glutamine synthetase]-L-tyrosine + ADP. It carries out the reaction [glutamine synthetase]-L-tyrosine + ATP = [glutamine synthetase]-O(4)-(5'-adenylyl)-L-tyrosine + diphosphate. Its function is as follows. Involved in the regulation of glutamine synthetase GlnA, a key enzyme in the process to assimilate ammonia. When cellular nitrogen levels are high, the C-terminal adenylyl transferase (AT) inactivates GlnA by covalent transfer of an adenylyl group from ATP to specific tyrosine residue of GlnA, thus reducing its activity. Conversely, when nitrogen levels are low, the N-terminal adenylyl removase (AR) activates GlnA by removing the adenylyl group by phosphorolysis, increasing its activity. The regulatory region of GlnE binds the signal transduction protein PII (GlnB) which indicates the nitrogen status of the cell. This is Bifunctional glutamine synthetase adenylyltransferase/adenylyl-removing enzyme from Bradyrhizobium sp. (strain ORS 278).